The sequence spans 253 residues: Imidazole glycerol phosphate synthase subunit HisF (253 aa).

Active-site residues include Asp-11 and Asp-130.

The protein belongs to the HisA/HisF family. In terms of assembly, heterodimer of HisH and HisF.

The protein resides in the cytoplasm. The catalysed reaction is 5-[(5-phospho-1-deoxy-D-ribulos-1-ylimino)methylamino]-1-(5-phospho-beta-D-ribosyl)imidazole-4-carboxamide + L-glutamine = D-erythro-1-(imidazol-4-yl)glycerol 3-phosphate + 5-amino-1-(5-phospho-beta-D-ribosyl)imidazole-4-carboxamide + L-glutamate + H(+). Its pathway is amino-acid biosynthesis; L-histidine biosynthesis; L-histidine from 5-phospho-alpha-D-ribose 1-diphosphate: step 5/9. IGPS catalyzes the conversion of PRFAR and glutamine to IGP, AICAR and glutamate. The HisF subunit catalyzes the cyclization activity that produces IGP and AICAR from PRFAR using the ammonia provided by the HisH subunit. This Cereibacter sphaeroides (strain ATCC 17029 / ATH 2.4.9) (Rhodobacter sphaeroides) protein is Imidazole glycerol phosphate synthase subunit HisF.